We begin with the raw amino-acid sequence, 664 residues long: UV-stimulated scaffold protein A homolog (664 aa).

The VHS-like stretch occupies residues 10–153; the sequence is KVIGLIEKAT…LKNTLKLKFP (144 aa). The stretch at 148 to 180 forms a coiled coil; it reads LKLKFPDLQANAARIQRERQEREMKTKEILRNK. Disordered regions lie at residues 330 to 350 and 362 to 403; these read HGNEETNEEEEDIWEEDDGKV and MRTQ…GNSL. Positions 334 to 347 are enriched in acidic residues; the sequence is ETNEEEEDIWEEDD. Residues 363-374 are compositionally biased toward polar residues; it reads RTQQSENSSLPS. The segment covering 377-387 has biased composition (basic and acidic residues); the sequence is EAKKSTSEARS. A compositionally biased stretch (polar residues) spans 388 to 402; it reads NKVSNTKKVGSSGNS. Residues 473-500 form a UVSSA-type zinc finger; sequence TPPCRASLKKGGLCQRRDLRVCPFHGPI. The Zn(2+) site is built by cysteine 476, cysteine 486, cysteine 494, and histidine 497. Disordered stretches follow at residues 514 to 546 and 640 to 664; these read SPLDESENQTSSTSGTNQDVSMDETTSDSDPNQ and VKGTNPQQLAQGNDEKCRDTSANQW. Composition is skewed to polar residues over residues 521-533 and 640-650; these read NQTSSTSGTNQDV and VKGTNPQQLAQ.

Belongs to the UVSSA family.

The protein resides in the chromosome. This Arabidopsis thaliana (Mouse-ear cress) protein is UV-stimulated scaffold protein A homolog.